Reading from the N-terminus, the 765-residue chain is Protein transport protein Sec23A (765 aa).

Residue T2 is modified to N-acetylthreonine. Zn(2+)-binding residues include C61, C66, C85, and C88. Position 308 is a phosphothreonine (T308). The stretch at 632–718 is one Gelsolin-like repeat; the sequence is PEPVLLDSSS…EHGGSQARFL (87 aa).

Belongs to the SEC23/SEC24 family. SEC23 subfamily. In terms of assembly, COPII is composed of at least five proteins: the Sec23/24 complex, the Sec13/31 complex and Sar1. Interacts with SEC23IP. Interacts with HTR4. Interacts with SEC16A. Interacts with SLC6A4. Interacts (as part of the Sec23/24 complex) with SEC22B; recruits SEC22B into COPII-coated vesicles and allows the transport of this cargo from the endoplasmic reticulum to the Golgi. Interacts (via Gelsolin-like repeat) with MIA2 and MIA3; specifically involved in the transport of large cargos like the collagen COL7A1. Interacts with DDHD1. Interacts with TMEM39A. Interacts with SACM1L; this interaction is reduced in the absence of TMEM39A. Interacts with kinase FAM20C; transport of FAM20C from the endoplasmic reticulum to the Golgi is likely to be mediated by COPII vesicles. As to expression, high levels in brain and fibroblasts.

The protein localises to the cytoplasmic vesicle. The protein resides in the COPII-coated vesicle membrane. It localises to the endoplasmic reticulum membrane. It is found in the cytoplasm. Its subcellular location is the cytosol. In terms of biological role, component of the coat protein complex II (COPII) which promotes the formation of transport vesicles from the endoplasmic reticulum (ER). The coat has two main functions, the physical deformation of the endoplasmic reticulum membrane into vesicles and the selection of cargo molecules for their transport to the Golgi complex. Required for the translocation of insulin-induced glucose transporter SLC2A4/GLUT4 to the cell membrane. In Mus musculus (Mouse), this protein is Protein transport protein Sec23A.